The sequence spans 95 residues: Bacterial microcompartment shell protein EutM (95 aa).

Residues 6–90 (ALGMIETKGL…PHFEVDAILP (85 aa)) enclose the BMC domain.

It belongs to the bacterial microcompartments protein family. As to quaternary structure, homohexamer; has a positively charged pore 9 Angstroms in diameter. The hexamers pack into a two-dimensional array. May interact with EutQ.

The protein localises to the bacterial microcompartment. It participates in amine and polyamine degradation; ethanolamine degradation. A component of the bacterial microcompartment (BMC) shell dedicated to ethanolamine degradation. Each homohexamer has a central pore with an opening of up to 9.0 Angstroms. Expression of the eut operon may allow this bacteria to use ethanolamine as a carbon, nitrogen and energy source. The pore probably allows metabolite passage into and out of the BMC. This is Bacterial microcompartment shell protein EutM from Clostridioides difficile (strain 630) (Peptoclostridium difficile).